Reading from the N-terminus, the 40-residue chain is Beta-glucosidase 1 (40 aa).

The enzyme catalyses Hydrolysis of terminal, non-reducing beta-D-glucosyl residues with release of beta-D-glucose.. This is Beta-glucosidase 1 from Passalora fulva (Tomato leaf mold).